The sequence spans 791 residues: IQ motif and ubiquitin-like domain-containing protein (791 aa).

The interval 1 to 73 (MSNQQEKYEA…SDQSFSSLEP (73 aa)) is disordered. Residues 131–207 (ATVKVVLIPV…VQVEIFSTNP (77 aa)) enclose the Ubiquitin-like domain. The region spanning 338 to 367 (RLKAVIVIQTYYRQWHAKIFVENLRRQKSL) is the IQ domain.

In terms of assembly, component of the axonemal radial spoke 1 (RS1) complex, at least composed of spoke head proteins RSPH1, RSPH3, RSPH9 and the cilia-specific component RSPH4A or sperm-specific component RSPH6A, spoke stalk proteins RSPH14, DNAJB13, DYDC1, ROPN1L and NME5, and the anchor protein IQUB. Does not appear to be part of radial spoke complexes 2 or 3 (RS2 or RS3). Interacts with CALM1. Interacts with DNAJB13. Interacts with DYNLL2. Interacts with NME5. Interacts with RSPH3. Interacts with RSPH9. Interacts with ZMYND10. Interacts with calmodulin; the interaction occurs in conditions of low but not high calcium.

The protein resides in the cytoplasm. Its subcellular location is the cytoskeleton. It is found in the flagellum axoneme. It localises to the cell projection. The protein localises to the cilium. Adapter protein that anchors the radial spoke 1 (RS1) complex to the A microtubule of outer doublet microtubules in axonemes. The triple radial spokes (RS1, RS2 and RS3) are required to modulate beating of the sperm flagellum. May play a role in inhibiting signaling via MAPK1/ERK2 and MAPK3/ERK1. Additionally, may play a role in the functioning of cilia. Not required for the functioning of tracheal or ependymal cilia. The polypeptide is IQ motif and ubiquitin-like domain-containing protein (IQUB) (Homo sapiens (Human)).